Here is a 231-residue protein sequence, read N- to C-terminus: Cilia- and flagella-associated protein 299 (231 aa).

It is found in the cytoplasm. It localises to the nucleus. Its function is as follows. May be involved in spermatogenesis. This is Cilia- and flagella-associated protein 299 from Bos taurus (Bovine).